Reading from the N-terminus, the 89-residue chain is MKTLLLTLVVVTIVCLDLGYTMQCKTCSFYTCPNSETCPDGKNICVKRSWTAVAGDGLKREIRRECAATCPPSKLGLTVFCCTTDNCNH.

Positions 1–21 (MKTLLLTLVVVTIVCLDLGYT) are cleaved as a signal peptide. 5 disulfide bridges follow: Cys-24-Cys-45, Cys-27-Cys-32, Cys-38-Cys-66, Cys-70-Cys-81, and Cys-82-Cys-87.

Belongs to the three-finger toxin family. Ancestral subfamily. Orphan group V sub-subfamily. As to expression, expressed by the venom gland.

It localises to the secreted. Its function is as follows. Exhibits M2 muscarinic acetylcholine receptor (CHRM2)-blocking activity, but has a weak binding activity toward nicotinic AChR. Moreover, it inhibits collagen-induced platelet aggregation. This Bungarus multicinctus (Many-banded krait) protein is Long neurotoxin homolog TA-bm16.